Reading from the N-terminus, the 153-residue chain is 3-hydroxyacyl-[acyl-carrier-protein] dehydratase FabZ (153 aa).

Residue H57 is part of the active site.

The protein belongs to the thioester dehydratase family. FabZ subfamily.

It is found in the cytoplasm. The catalysed reaction is a (3R)-hydroxyacyl-[ACP] = a (2E)-enoyl-[ACP] + H2O. In terms of biological role, involved in unsaturated fatty acids biosynthesis. Catalyzes the dehydration of short chain beta-hydroxyacyl-ACPs and long chain saturated and unsaturated beta-hydroxyacyl-ACPs. In Aeromonas hydrophila subsp. hydrophila (strain ATCC 7966 / DSM 30187 / BCRC 13018 / CCUG 14551 / JCM 1027 / KCTC 2358 / NCIMB 9240 / NCTC 8049), this protein is 3-hydroxyacyl-[acyl-carrier-protein] dehydratase FabZ.